The chain runs to 26 residues: Mucus envelope protein (26 aa).

Glycosylated. As to expression, produced by the opercular gland in the gill cavity and secreted as part of the mucus cocoon.

It localises to the secreted. Functionally, exhibits antibacterial activity. May play a role in protection against parasite settlement. The polypeptide is Mucus envelope protein (Scarus vetula (Queen parrotfish)).